Reading from the N-terminus, the 527-residue chain is Low-affinity Na(+)/H(+) antiporter NhaS1 (527 aa).

11 helical membrane passes run 18-38, 41-61, 94-114, 126-146, 169-189, 196-216, 240-260, 276-296, 311-331, 352-372, and 380-400; these read FLIVLSVSLSIATLSKTVPIL, IPYTLLLVIVGMALAFVDVKL, WFPITLFATLGVVICVVGIAF, IAFLAAAALSATDPVSVIALF, VAVVVFLILVGIPLGTSTFDL, FVTVIGIGVGCGLVIGFSLSL, ILAENLGGSGVIGVVVVGMVL, IVSIFWEFVAFFVNSIIFLLI, LILIAIAAVVVTRLVSVFGLS, TVLWWGGLRGSVAIAVALSVP, and AIIDIVFGVVLFTLLVQGLTT.

Belongs to the monovalent cation:proton antiporter 1 (CPA1) transporter (TC 2.A.36) family.

Its subcellular location is the cell membrane. Na(+)/H(+) antiporter that extrudes sodium in exchange for external protons. Might be able to function at relatively high concentrations of Na(+) ions. Also has Li(+)/H(+) antiport activity under K(+)-rich conditions, but it might not have any physiological relevance. The protein is Low-affinity Na(+)/H(+) antiporter NhaS1 (nhaS1) of Synechocystis sp. (strain ATCC 27184 / PCC 6803 / Kazusa).